The sequence spans 139 residues: Small ribosomal subunit protein uS12 (139 aa).

Positions 118 to 139 (AGVANRNQSRSRYGTKKPKPKS) are disordered. Residues 130 to 139 (YGTKKPKPKS) show a composition bias toward basic residues.

Belongs to the universal ribosomal protein uS12 family. In terms of assembly, part of the 30S ribosomal subunit. Contacts proteins S8 and S17. May interact with IF1 in the 30S initiation complex.

In terms of biological role, with S4 and S5 plays an important role in translational accuracy. Interacts with and stabilizes bases of the 16S rRNA that are involved in tRNA selection in the A site and with the mRNA backbone. Located at the interface of the 30S and 50S subunits, it traverses the body of the 30S subunit contacting proteins on the other side and probably holding the rRNA structure together. The combined cluster of proteins S8, S12 and S17 appears to hold together the shoulder and platform of the 30S subunit. This is Small ribosomal subunit protein uS12 from Mycoplasma mobile (strain ATCC 43663 / 163K / NCTC 11711) (Mesomycoplasma mobile).